The following is a 338-amino-acid chain: Gibberellin 2-beta-dioxygenase 8 (338 aa).

The Fe2OG dioxygenase domain occupies 191 to 290 (NTCYLRMNRY…RFSTAYFMCP (100 aa)). Fe cation contacts are provided by H215, D217, and H271. R281 is a catalytic residue. Position 281 (R281) interacts with 2-oxoglutarate.

The protein belongs to the iron/ascorbate-dependent oxidoreductase family. GA2OX subfamily. Requires Fe(2+) as cofactor.

The catalysed reaction is gibberellin A1 + 2-oxoglutarate + O2 = gibberellin A8 + succinate + CO2. It participates in plant hormone biosynthesis; gibberellin biosynthesis. Catalyzes the 2-beta-hydroxylation of gibberellins (GA) precursors, rendering them unable to be converted to active GAs. Hydroxylates the C20-GA GA12 and GA53, but is not active on C19-GAs, like GA1, GA4, GA9 and GA20. The polypeptide is Gibberellin 2-beta-dioxygenase 8 (GA2OX8) (Arabidopsis thaliana (Mouse-ear cress)).